The following is a 123-amino-acid chain: Thioredoxin H-type 1 (123 aa).

Ala2 carries the post-translational modification N-acetylalanine. The Thioredoxin domain maps to Ala2–Gln119. Cys45 and Cys48 form a disulfide bridge.

Belongs to the thioredoxin family. Plant H-type subfamily.

It localises to the cytoplasm. Participates in various redox reactions through the reversible oxidation of the active center dithiol to a disulfide. The H form is known to activate a number of cytosolic enzymes. This Brassica napus (Rape) protein is Thioredoxin H-type 1 (THL-1).